We begin with the raw amino-acid sequence, 178 residues long: MQAVEMEKKAGNENPMREVVLDKVVINIGVGESGERHKKAYSLLEELVEQKPAITYAKMTIKNFGIRKGEAIGIKVTLRGEKALKFLKDALTVKENRLSRKSIGEGYFAFGIAEHIDLPGVDYDPDVGIFGMDVCVSLKRRGYRVARRRRKKAKIATSHRVTKEDTIRWLESLGVIVE.

This sequence belongs to the universal ribosomal protein uL5 family. As to quaternary structure, part of the 50S ribosomal subunit; contacts the 5S rRNA and probably tRNA. Forms a bridge to the 30S subunit in the 70S ribosome.

In terms of biological role, this is one of the proteins that bind and probably mediate the attachment of the 5S RNA into the large ribosomal subunit, where it forms part of the central protuberance. In the 70S ribosome it contacts protein S13 of the 30S subunit (bridge B1b), connecting the 2 subunits; this bridge is implicated in subunit movement. May contact the P site tRNA; the 5S rRNA and some of its associated proteins might help stabilize positioning of ribosome-bound tRNAs. This is Large ribosomal subunit protein uL5 from Archaeoglobus fulgidus (strain ATCC 49558 / DSM 4304 / JCM 9628 / NBRC 100126 / VC-16).